The following is a 385-amino-acid chain: uncharacterized protein (385 aa).

9 helical membrane-spanning segments follow: residues 12–32 (GVAI…PKAA), 50–70 (WAFL…LLFG), 90–110 (LLVL…ILLA), 132–152 (FNTG…LGLI), 195–215 (LALG…GAAL), 233–253 (TGFV…ALQW), 272–292 (LSAP…WPQL), 312–332 (YLLQ…FMHF), and 335–355 (LELL…SVIW).

It to B.subtilis YxaH and YrkO.

The protein localises to the cell membrane. In terms of biological role, involved in transport. This is an uncharacterized protein from Escherichia coli (strain K12).